The chain runs to 156 residues: MTTLNAKPDFSLFLQALSWEIDDQAGIEVRNDLLREVGRGMAGRFQPPLCNTIHQLQIELNALLAMINWGYVKLDLLAEEQAMRIVHEDLPQVGSAGEPAGTWLAPVLEGLYGRWITSQPGAFGDYVVTRDIDAEDLNSVPAQTVILYMRTRSAAT.

Its pathway is glycan metabolism; bacterial cellulose biosynthesis. May have a major role in the perfection of crystallization, involved either in the pore structure itself or in the organization of the pores within the linear array of terminal synthesizing complexes (TCs). The polypeptide is Cellulose synthase operon protein D (Komagataeibacter sucrofermentans (strain ATCC 700178 / DSM 15973 / CECT 7291 / JCM 9730 / LMG 18788 / BPR 2001) (Acetobacter xylinus subsp. sucrofermentans)).